Reading from the N-terminus, the 132-residue chain is uncharacterized protein (132 aa).

Positions 45 to 115 (VHMEKHKLKI…VVIVTTAEGK (71 aa)) constitute a BIG2 domain.

The protein to B.anthracis BA1245.

This is an uncharacterized protein from Bacillus cereus (strain ATCC 14579 / DSM 31 / CCUG 7414 / JCM 2152 / NBRC 15305 / NCIMB 9373 / NCTC 2599 / NRRL B-3711).